Reading from the N-terminus, the 405-residue chain is L-carnitine CoA-transferase (405 aa).

Residues Lys-97 and Arg-104 each coordinate CoA. Asp-169 serves as the catalytic Nucleophile.

It belongs to the CoA-transferase III family. CaiB subfamily. Homodimer.

It localises to the cytoplasm. The enzyme catalyses crotonobetainyl-CoA + (R)-carnitine = crotonobetaine + (R)-carnitinyl-CoA. It carries out the reaction 4-(trimethylamino)butanoyl-CoA + (R)-carnitine = (R)-carnitinyl-CoA + 4-(trimethylamino)butanoate. Its pathway is amine and polyamine metabolism; carnitine metabolism. Catalyzes the reversible transfer of the CoA moiety from gamma-butyrobetainyl-CoA to L-carnitine to generate L-carnitinyl-CoA and gamma-butyrobetaine. Is also able to catalyze the reversible transfer of the CoA moiety from gamma-butyrobetainyl-CoA or L-carnitinyl-CoA to crotonobetaine to generate crotonobetainyl-CoA. In Escherichia coli (strain 55989 / EAEC), this protein is L-carnitine CoA-transferase.